Here is a 530-residue protein sequence, read N- to C-terminus: PC4 and SFRS1-interacting protein (530 aa).

The PWWP domain occupies 1–64; the sequence is MTRDFKPGDL…PKDIFPYSEN (64 aa). Residue Lys75 forms a Glycyl lysine isopeptide (Lys-Gly) (interchain with G-Cter in SUMO2) linkage. Residues 86–349 are disordered; it reads NNPKVKFSSQ…VEKKRETSMD (264 aa). A compositionally biased stretch (polar residues) spans 92-104; that stretch reads FSSQQASTKQSNA. 3 positions are modified to phosphoserine: Ser102, Ser105, and Ser106. Residues 113-135 are compositionally biased toward basic and acidic residues; it reads KETSVSKEDTDHEEKASNEDVTK. Thr115 and Thr122 each carry phosphothreonine. Residue Ser129 is modified to Phosphoserine. Phosphothreonine is present on Thr141. Residues 144-153 show a composition bias toward basic residues; sequence AARRGRKRKA. The short motif at 146–156 is the Nuclear localization signal element; it reads RRGRKRKAEKQ. Thr167 is modified (phosphothreonine). A phosphoserine mark is found at Ser177 and Ser206. The segment covering 213–261 has biased composition (basic and acidic residues); sequence EEDKSKKKGQEEKQPKKQLKKDEEGQKEEDKPRKEPDKKEGKKEVESKR. At Ser271 the chain carries Phosphoserine. A Phosphothreonine modification is found at Thr272. A phosphoserine mark is found at Ser273 and Ser275. The segment covering 274–283 has biased composition (acidic residues); sequence DSEEEGDDQE. Residues 287 to 302 are compositionally biased toward basic residues; it reads KRKGGRNFQTAHRRNM. A compositionally biased stretch (basic and acidic residues) spans 305–349; sequence GQHEKEAADRKRKQEEQMETEQQNKDEGKKPEVKKVEKKRETSMD. 2 coiled-coil regions span residues 306–334 and 371–395; these read QHEK…EGKK and NRCI…KHTE. The tract at residues 340–417 is integrase-binding domain (IBD); the sequence is VEKKRETSMD…VSQIIMEKST (78 aa). Residue Ser434 is modified to Phosphoserine. Thr437 is subject to Phosphothreonine. At Ser443 the chain carries Phosphoserine. Residues 446-473 show a composition bias toward basic and acidic residues; it reads EQRQHEEANKTKDQGKKGPNKKLDKEQT. Positions 446–530 are disordered; it reads EQRQHEEANK…ISLKDSTLDN (85 aa). The span at 474–494 shows a compositional bias: polar residues; the sequence is GSKTLNGGSDAPDSNQAQHNG. The segment covering 498–530 has biased composition (basic and acidic residues); sequence EESKDKHEASSKKKPSNEERETEISLKDSTLDN. The residue at position 517 (Arg517) is a Citrulline. The residue at position 522 (Ser522) is a Phosphoserine. Thr527 is modified (phosphothreonine).

Belongs to the HDGF family. As to quaternary structure, monomer. Interacts with IFRD1/PC4. Interacts (via IBD domain) with POGZ (via IBM motif) and CDCA7L (via IBM motifs). Interacts (via IBD domain) with KMT2A (via IBM motifs) with a moderate affinity whereas interacts with the KMT2A-MEN1 complex with a greater affinity; MEN1 enhances interaction of KMT2A with PSIP1. Interacts (via IBD domain) with IWS1 (via IBM motif), MED1 (via IBM motif) and DBF4 (via IBM motifs). In terms of assembly, (Microbial infection) Interacts (via IBD domain) with feline immunodeficiency virus (FIV) integrase (IN), determining its nuclear localization, its tight association with chromatin and its protection from the proteasome. Citrullinated by PADI4.

Its subcellular location is the nucleus. Transcriptional coactivator involved in neuroepithelial stem cell differentiation and neurogenesis. Involved in particular in lens epithelial cell gene regulation and stress responses. May play an important role in lens epithelial to fiber cell terminal differentiation. May play a protective role during stress-induced apoptosis. The polypeptide is PC4 and SFRS1-interacting protein (PSIP1) (Felis catus (Cat)).